Here is a 644-residue protein sequence, read N- to C-terminus: ATP-dependent zinc metalloprotease FtsH (644 aa).

At 1–4 the chain is on the cytoplasmic side; that stretch reads MAKN. Residues 5–25 traverse the membrane as a helical segment; the sequence is LILWLVIAVVLMSVFQSFGPS. Topologically, residues 26–98 are periplasmic; that stretch reads ESNGRKVDYS…VGEPPEEPSL (73 aa). The helical transmembrane segment at 99–119 threads the bilayer; sequence LASIFISWFPMLLLIGVWIFF. Residues 120-644 are Cytoplasmic-facing; sequence MRQMQGGGGK…NTMSEQLGDK (525 aa). Position 192–199 (192–199) interacts with ATP; the sequence is GPPGTGKT. A Zn(2+)-binding site is contributed by H414. The active site involves E415. Residues H418 and D492 each coordinate Zn(2+). Residues 598–644 are disordered; it reads VRPPAGWEEPGASNNAGDNGSPKAPRPVDEPRTPNPGNTMSEQLGDK. The segment covering 632-644 has biased composition (polar residues); sequence NPGNTMSEQLGDK.

This sequence in the central section; belongs to the AAA ATPase family. It in the C-terminal section; belongs to the peptidase M41 family. As to quaternary structure, homohexamer. Zn(2+) serves as cofactor.

The protein localises to the cell inner membrane. Its function is as follows. Acts as a processive, ATP-dependent zinc metallopeptidase for both cytoplasmic and membrane proteins. Plays a role in the quality control of integral membrane proteins. The polypeptide is ATP-dependent zinc metalloprotease FtsH (Escherichia coli O157:H7).